A 198-amino-acid polypeptide reads, in one-letter code: Putative mycofactocin biosynthesis transcriptional regulator MftR (198 aa).

The 61-residue stretch at 12 to 72 (STTPHHISDV…GDFSTHLAQL (61 aa)) folds into the HTH tetR-type domain. Residues 35–54 (SVDDIARAAGIARRTLFRYY) constitute a DNA-binding region (H-T-H motif).

In terms of biological role, may regulate a gene cluster involved in mycofactocin expression. Mycofactocin is a conserved polypeptide that might serve as an electron carrier. This Mycobacterium tuberculosis (strain ATCC 25618 / H37Rv) protein is Putative mycofactocin biosynthesis transcriptional regulator MftR (mftR).